We begin with the raw amino-acid sequence, 373 residues long: Arfaptin-1 (373 aa).

The tract at residues Met-1–Gln-47 is disordered. Ala-2 bears the N-acetylalanine mark. A phosphoserine mark is found at Ser-5, Ser-28, Ser-36, Ser-39, Ser-69, Ser-79, and Ser-132. Positions Asp-22 to His-35 are enriched in basic and acidic residues. The 201-residue stretch at Thr-153 to Lys-353 folds into the AH domain. Thr-361 bears the Phosphothreonine mark.

As to quaternary structure, forms homodimers or heterodimers with ARFIP2. Interacts with non-myristoylated GTP-bound ARF3, but not to GDP-bound ARF3. Interacts with ARF1. Binds with lower affinity to ARF5 and with very little affinity to ARF6. Interacts with ARL1. Interacts with ATG9A. Phosphorylated by PRKD1; phosphorylation delocalizes ARFIP1 from the Golgi and disrupts its ability to inhibit the activity of ADP-ribosylation factor, an important component of the vesicle scission machinery. As to expression, ubiquitously expressed. Higher levels in liver, pancreas, placenta, skeletal muscle and heart.

It localises to the golgi apparatus. Its subcellular location is the trans-Golgi network membrane. In terms of biological role, plays a role in controlling biogenesis of secretory granules at the trans-Golgi network. Mechanistically, binds ARF-GTP at the neck of a growing secretory granule precursor and forms a protective scaffold. Once the granule precursor has been completely loaded, active PRKD1 phosphorylates ARFIP1 and releases it from ARFs. In turn, ARFs induce fission. Through this mechanism, ensures proper secretory granule formation at the Golgi of pancreatic beta cells. The sequence is that of Arfaptin-1 from Homo sapiens (Human).